The primary structure comprises 162 residues: 2-C-methyl-D-erythritol 2,4-cyclodiphosphate synthase (162 aa).

2 residues coordinate a divalent metal cation: Asp12 and His14. 4-CDP-2-C-methyl-D-erythritol 2-phosphate-binding positions include 12 to 14 (DVH) and 38 to 39 (HS). His46 serves as a coordination point for a divalent metal cation. Residues 60–62 (DIG), 136–139 (TTTE), Phe143, and Arg146 contribute to the 4-CDP-2-C-methyl-D-erythritol 2-phosphate site.

It belongs to the IspF family. Homotrimer. A divalent metal cation is required as a cofactor.

It carries out the reaction 4-CDP-2-C-methyl-D-erythritol 2-phosphate = 2-C-methyl-D-erythritol 2,4-cyclic diphosphate + CMP. Its pathway is isoprenoid biosynthesis; isopentenyl diphosphate biosynthesis via DXP pathway; isopentenyl diphosphate from 1-deoxy-D-xylulose 5-phosphate: step 4/6. Involved in the biosynthesis of isopentenyl diphosphate (IPP) and dimethylallyl diphosphate (DMAPP), two major building blocks of isoprenoid compounds. Catalyzes the conversion of 4-diphosphocytidyl-2-C-methyl-D-erythritol 2-phosphate (CDP-ME2P) to 2-C-methyl-D-erythritol 2,4-cyclodiphosphate (ME-CPP) with a corresponding release of cytidine 5-monophosphate (CMP). In Porphyromonas gingivalis (strain ATCC 33277 / DSM 20709 / CIP 103683 / JCM 12257 / NCTC 11834 / 2561), this protein is 2-C-methyl-D-erythritol 2,4-cyclodiphosphate synthase.